Reading from the N-terminus, the 639-residue chain is Chaperone protein DnaK (639 aa).

Phosphothreonine; by autocatalysis is present on Thr198. Positions Ser605 to Asp624 are disordered.

This sequence belongs to the heat shock protein 70 family.

Functionally, acts as a chaperone. This is Chaperone protein DnaK from Shewanella putrefaciens (strain CN-32 / ATCC BAA-453).